Reading from the N-terminus, the 152-residue chain is Snaclec 5 (152 aa).

The signal sequence occupies residues 1 to 23 (MGRFIFLSSGLLVVFLSLSGTGA). 3 cysteine pairs are disulfide-bonded: C27–C38, C55–C148, and C123–C140. The region spanning 34 to 149 (YGQHCYRAFK…CASHNPFVCK (116 aa)) is the C-type lectin domain.

Belongs to the snaclec family. In terms of assembly, heterodimer; disulfide-linked. Expressed by the venom gland.

It is found in the secreted. Its function is as follows. Interferes with one step of hemostasis (modulation of platelet aggregation, or coagulation cascade, for example). The chain is Snaclec 5 from Bitis arietans (African puff adder).